A 37-amino-acid polypeptide reads, in one-letter code: Large ribosomal subunit protein bL36c (37 aa).

Belongs to the bacterial ribosomal protein bL36 family.

The protein localises to the plastid. It is found in the chloroplast. The polypeptide is Large ribosomal subunit protein bL36c (Dioscorea elephantipes (Elephant's foot yam)).